Reading from the N-terminus, the 270-residue chain is Putative carbamate hydrolase RutD (270 aa).

Belongs to the AB hydrolase superfamily. Hydrolase RutD family.

It catalyses the reaction carbamate + 2 H(+) = NH4(+) + CO2. Its function is as follows. Involved in pyrimidine catabolism. May facilitate the hydrolysis of carbamate, a reaction that can also occur spontaneously. In Escherichia coli O44:H18 (strain 042 / EAEC), this protein is Putative carbamate hydrolase RutD.